Here is a 577-residue protein sequence, read N- to C-terminus: Proline--tRNA ligase (577 aa).

Belongs to the class-II aminoacyl-tRNA synthetase family. ProS type 1 subfamily. Homodimer.

The protein resides in the cytoplasm. The catalysed reaction is tRNA(Pro) + L-proline + ATP = L-prolyl-tRNA(Pro) + AMP + diphosphate. Catalyzes the attachment of proline to tRNA(Pro) in a two-step reaction: proline is first activated by ATP to form Pro-AMP and then transferred to the acceptor end of tRNA(Pro). As ProRS can inadvertently accommodate and process non-cognate amino acids such as alanine and cysteine, to avoid such errors it has two additional distinct editing activities against alanine. One activity is designated as 'pretransfer' editing and involves the tRNA(Pro)-independent hydrolysis of activated Ala-AMP. The other activity is designated 'posttransfer' editing and involves deacylation of mischarged Ala-tRNA(Pro). The misacylated Cys-tRNA(Pro) is not edited by ProRS. This chain is Proline--tRNA ligase, found in Chlamydia felis (strain Fe/C-56) (Chlamydophila felis).